The following is a 312-amino-acid chain: tRNA (adenine(58)-N(1))-methyltransferase catalytic subunit trmt61a (312 aa).

S-adenosyl-L-methionine contacts are provided by residues Leu85, 112 to 114 (SGS), Glu133, Arg138, 161 to 162 (DA), and Asp183.

The protein belongs to the class I-like SAM-binding methyltransferase superfamily. TRM61 family. In terms of assembly, heterotetramer; composed of two copies of trmt6 and two copies of trmt61a.

The protein resides in the nucleus. The enzyme catalyses adenosine(58) in tRNA + S-adenosyl-L-methionine = N(1)-methyladenosine(58) in tRNA + S-adenosyl-L-homocysteine + H(+). With respect to regulation, inhibited by calcium and magnesium ions and spermidine. Enhanced by KCl, NaCl and NH(4)Cl in concentrations from 0.1-0.25 M. Concentrations of more than 0.3 M are inhibitory. In terms of biological role, catalytic subunit of tRNA (adenine-N(1)-)-methyltransferase, which catalyzes the formation of N(1)-methyladenine at position 58 (m1A58) in initiator methionyl-tRNA. The polypeptide is tRNA (adenine(58)-N(1))-methyltransferase catalytic subunit trmt61a (trmt61a) (Dictyostelium discoideum (Social amoeba)).